We begin with the raw amino-acid sequence, 384 residues long: DNA replication and repair protein RecF (384 aa).

30-37 (GENAQGKT) serves as a coordination point for ATP.

The protein belongs to the RecF family.

The protein resides in the cytoplasm. In terms of biological role, the RecF protein is involved in DNA metabolism; it is required for DNA replication and normal SOS inducibility. RecF binds preferentially to single-stranded, linear DNA. It also seems to bind ATP. This is DNA replication and repair protein RecF from Levilactobacillus brevis (strain ATCC 367 / BCRC 12310 / CIP 105137 / JCM 1170 / LMG 11437 / NCIMB 947 / NCTC 947) (Lactobacillus brevis).